Consider the following 392-residue polypeptide: Sterol methyltransferase-like 3 (392 aa).

The chain crosses the membrane as a helical span at residues 20-42; it reads VTPWQAAAGVTAAIFIGSYLWHS.

Belongs to the class I-like SAM-binding methyltransferase superfamily. Erg6/SMT family.

It localises to the microsome membrane. Unable to convert squalene, botryococcene, cycloartenol, zymosterol or lanosterol to mono-, di-, tri- or tetramethylated derivatives. This Botryococcus braunii (Green alga) protein is Sterol methyltransferase-like 3 (SMT-3).